Here is a 379-residue protein sequence, read N- to C-terminus: Ribosomal RNA large subunit methyltransferase G (379 aa).

The protein belongs to the methyltransferase superfamily. RlmG family.

It localises to the cytoplasm. It carries out the reaction guanosine(1835) in 23S rRNA + S-adenosyl-L-methionine = N(2)-methylguanosine(1835) in 23S rRNA + S-adenosyl-L-homocysteine + H(+). Specifically methylates the guanine in position 1835 (m2G1835) of 23S rRNA. In Serratia proteamaculans (strain 568), this protein is Ribosomal RNA large subunit methyltransferase G.